Reading from the N-terminus, the 171-residue chain is Shikimate kinase (171 aa).

14–19 (GAGKST) lines the ATP pocket. Ser18 is a Mg(2+) binding site. Substrate is bound by residues Asp36, Arg60, and Gly82. Residue Arg120 coordinates ATP. Residue Arg139 participates in substrate binding. Gln156 serves as a coordination point for ATP.

The protein belongs to the shikimate kinase family. Monomer. It depends on Mg(2+) as a cofactor.

It localises to the cytoplasm. It carries out the reaction shikimate + ATP = 3-phosphoshikimate + ADP + H(+). The protein operates within metabolic intermediate biosynthesis; chorismate biosynthesis; chorismate from D-erythrose 4-phosphate and phosphoenolpyruvate: step 5/7. Catalyzes the specific phosphorylation of the 3-hydroxyl group of shikimic acid using ATP as a cosubstrate. This is Shikimate kinase from Shewanella pealeana (strain ATCC 700345 / ANG-SQ1).